Consider the following 1247-residue polypeptide: Protein jagged-2 (1247 aa).

An N-terminal signal peptide occupies residues 1 to 23 (MRARGWGRLPRRLLLLLVLCVQA). The Extracellular segment spans residues 24–1082 (TRPMGYFELQ…ETVVMGGSST (1059 aa)). An N-linked (GlcNAc...) asparagine glycan is attached at N153. Residues 196–240 (VRCDENYYSATCNKFCRPRNDFFGHYTCDQYGNKACMDGWMGKEC) enclose the DSL domain. 42 disulfide bridges follow: C198–C207, C211–C223, C231–C240, C245–C256, C249–C262, C264–C273, C276–C287, C282–C293, C295–C304, C311–C323, C317–C333, C335–C344, C351–C362, C356–C371, C373–C382, C389–C400, C394–C409, C411–C420, C427–C438, C432–C447, C449–C458, C465–C475, C469–C484, C486–C495, C502–C513, C507–C522, C524–C533, C540–C551, C545–C560, C562–C571, C589–C612, C606–C622, C624–C633, C640–C651, C645–C660, C662–C671, C678–C689, C683–C698, C700–C709, C716–C727, C721–C736, and C738–C747. One can recognise an EGF-like 1 domain in the interval 241-274 (KEAVCKQGCNLLHGGCTVPGECRCSYGWQGKFCD). The region spanning 275–305 (ECVPYPGCVHGSCVEPWHCDCETNWGGLLCD) is the EGF-like 2; atypical domain. EGF-like domains are found at residues 307–345 (DLNY…KNCE) and 347–383 (AEHA…PTCA). Residues 385-421 (DIDECASNPCAAGGTCVDQVDGFECICPEQWVGATCQ) form the EGF-like 5; calcium-binding domain. The EGF-like 6; calcium-binding domain maps to 423-459 (DANECEGKPCLNAFSCKNLIGGYYCDCLPGWKGINCQ). One can recognise an EGF-like 7; calcium-binding domain in the interval 461–496 (NINDCHGQCQHGGTCKDLVNGYQCVCPRGFGGRHCE). EGF-like domains are found at residues 498-534 (EYDK…LHCE) and 536-572 (DMDL…KNCS). A glycan (N-linked (GlcNAc...) asparagine) is linked at N570. The 61-residue stretch at 574–634 (PRDTCPGGAC…DSGFTGTYCH (61 aa)) folds into the EGF-like 10; atypical domain. N619 carries an N-linked (GlcNAc...) asparagine glycan. The region spanning 636 to 672 (NIDDCMGQPCRNGGTCIDEVDSFRCFCPSGWEGELCD) is the EGF-like 11; calcium-binding domain. Residues 674–710 (NPNDCLPDPCHSRGRCYDLVNDFYCACDDGWKGKTCH) form the EGF-like 12; calcium-binding domain. EGF-like domains are found at residues 712–748 (REFQ…STCT) and 751–787 (KNSS…RTCT). The N-linked (GlcNAc...) asparagine glycan is linked to N752. Cystine bridges form between C755–C766, C760–C775, C777–C786, C793–C804, C798–C813, C815–C824, C831–C842, C836–C851, and C853–C862. The region spanning 789 to 825 (NTNDCNPLPCYNGGICVDGVNWFRCECAPGFAGPDCR) is the EGF-like 15; calcium-binding domain. An EGF-like 16; calcium-binding domain is found at 827–863 (NIDECQSSPCAYGATCVDEINGYRCSCPPGRSGPRCQ). The N-linked (GlcNAc...) asparagine glycan is linked to N1060. The helical transmembrane segment at 1083-1103 (GLLVPVLCSVFSVLWLACVVI) threads the bilayer. Topologically, residues 1104 to 1247 (CVWWTRKRRK…TKDVRRAGRE (144 aa)) are cytoplasmic. Basic and acidic residues-rich tracts occupy residues 1115-1125 (RERSRLPRDES), 1192-1212 (LSRG…KFTK), and 1230-1247 (VDNR…AGRE). 2 disordered regions span residues 1115–1148 (RERS…GSGL) and 1167–1247 (PRRA…AGRE). A Phosphoserine modification is found at S1125.

As to expression, found to be highest in fetal thymus, epidermis, foregut dorsal root ganglia and inner ear. In 2-weeK-old mice, abundant in heart, lung, thymus, skeletal muscle, brain and testis. Expression overlaps partially with Notch1 expression.

The protein resides in the membrane. Functionally, putative Notch ligand involved in the mediation of Notch signaling. Plays an essential role during limb, craniofacial and thymic development. May be involved in myogenesis and in the development of peripheral and central nervous systems. The sequence is that of Protein jagged-2 (Jag2) from Mus musculus (Mouse).